The chain runs to 73 residues: Disintegrin lachesin (73 aa).

Residues 1-73 form the Disintegrin domain; the sequence is EAGEECDCGA…ADCPRNGYYG (73 aa). Intrachain disulfides connect cysteine 6–cysteine 21, cysteine 8–cysteine 16, cysteine 15–cysteine 38, cysteine 29–cysteine 35, cysteine 34–cysteine 59, and cysteine 47–cysteine 66. The Cell attachment site motif lies at 51 to 53; that stretch reads RGD. The interval 51 to 73 is disordered; it reads RGDNPDDRCTGQSADCPRNGYYG.

It belongs to the venom metalloproteinase (M12B) family. P-II subfamily. P-IIa sub-subfamily. As to quaternary structure, monomer (disintegrin). In terms of tissue distribution, expressed by the venom gland.

The protein resides in the secreted. Inhibits fibrinogen interaction with platelets. Acts by binding to alpha-IIb/beta-3 (ITGA2B/ITGB3) on the platelet surface and inhibits aggregation induced by ADP, thrombin, platelet-activating factor and collagen. In Lachesis muta muta (Bushmaster), this protein is Disintegrin lachesin.